Reading from the N-terminus, the 355-residue chain is Beta-1,2-mannobiose phosphorylase (355 aa).

Beta-D-Manp-(1-&gt;2)-beta-D-Manp-(1-&gt;2)-D-Manp is bound by residues Asn-31, Arg-46, Arg-89, 140–141, Lys-188, Tyr-273, and Asp-333; that span reads ED.

This sequence belongs to the glycosyl hydrolase 130 family. As to quaternary structure, homodimer.

It catalyses the reaction beta-D-mannopyranosyl-(1-&gt;2)-D-mannopyranose + phosphate = alpha-D-mannose 1-phosphate + D-mannose. Its function is as follows. Catalyzes the reversible phosphorolysis of 1,2-beta-oligomannan. In phosphorolytic reactions, prefers beta-1,2-mannobiose (beta-1,2-Man2) as substrate, but can also use beta-1,2-mannotriose. The sequence is that of Beta-1,2-mannobiose phosphorylase from Listeria innocua serovar 6a (strain ATCC BAA-680 / CLIP 11262).